The primary structure comprises 429 residues: Histidine--tRNA ligase (429 aa).

This sequence belongs to the class-II aminoacyl-tRNA synthetase family. Homodimer.

Its subcellular location is the cytoplasm. It carries out the reaction tRNA(His) + L-histidine + ATP = L-histidyl-tRNA(His) + AMP + diphosphate + H(+). The protein is Histidine--tRNA ligase of Pseudomonas aeruginosa (strain UCBPP-PA14).